Consider the following 386-residue polypeptide: Probable serine/threonine-protein kinase PBL23 (386 aa).

The S-palmitoyl cysteine moiety is linked to residue Cys-5. The Protein kinase domain occupies 82–360; that stretch reads FNPDNQLGEG…SDVVTALEYL (279 aa). Residues 88–96 and Lys-111 each bind ATP; that span reads LGEGGFGRV. The active-site Proton acceptor is the Asp-210. Positions 365 to 386 are disordered; it reads TEEDGQTVEGEEEEEEDERSKL. Residues 368 to 386 are compositionally biased toward acidic residues; the sequence is DGQTVEGEEEEEEDERSKL.

Belongs to the protein kinase superfamily. Ser/Thr protein kinase family.

The protein resides in the cell membrane. It catalyses the reaction L-seryl-[protein] + ATP = O-phospho-L-seryl-[protein] + ADP + H(+). The catalysed reaction is L-threonyl-[protein] + ATP = O-phospho-L-threonyl-[protein] + ADP + H(+). In terms of biological role, may be involved in plant defense signaling. This Arabidopsis thaliana (Mouse-ear cress) protein is Probable serine/threonine-protein kinase PBL23.